A 579-amino-acid polypeptide reads, in one-letter code: uncharacterized protein (579 aa).

Positions 449–577 (QKGVFILVDI…GKNRLMIHDS (129 aa)) constitute a GGDEF domain.

This is an uncharacterized protein from Bacillus subtilis (strain 168).